We begin with the raw amino-acid sequence, 455 residues long: Elongation factor Tu, mitochondrial (455 aa).

The N-terminal 46 residues, 1 to 46 (MTTMAAATLLRATPHFSGLAAGRTFLLQGLLRLLKAPALPLLCRGL), are a transit peptide targeting the mitochondrion. Residues 58–254 (KPHVNVGTIG…AVDTYIPVPA (197 aa)) form the tr-type G domain. The tract at residues 67 to 74 (GHVDHGKT) is G1. GTP-binding residues include Asp70, Gly72, Lys73, Thr74, and Thr75. Residue Thr74 participates in Mg(2+) binding. Lys82 is modified (N6-acetyllysine). An N6-acetyllysine; alternate modification is found at Lys91. Lys91 carries the N6-succinyllysine; alternate modification. A G2 region spans residues 108 to 112 (GITIN). Positions 129 to 132 (DCPG) are G3. Asn184, Asp187, Ser222, Ala223, and Leu224 together coordinate GTP. The G4 stretch occupies residues 184-187 (NKAD). Positions 222–224 (SAL) are G5. Lys237 bears the N6-succinyllysine mark. Lys259 carries the post-translational modification N6-acetyllysine. Residue Thr281 is modified to Phosphothreonine. An N6-succinyllysine modification is found at Lys289. Residue Ser315 is modified to Phosphoserine. Residues Lys364 and Lys421 each carry the N6-acetyllysine modification.

It belongs to the TRAFAC class translation factor GTPase superfamily. Classic translation factor GTPase family. EF-Tu/EF-1A subfamily. In terms of assembly, interacts with NLRX1. Interacts with ATG16L1. As to quaternary structure, (Microbial infection) Interacts with human parainfluenza virus 3 matrix protein; this interaction inhibits RLR-mediated type I interferon production while promoting autophagy. (Microbial infection) Interacts with Hantaan hantavirus glycoprotein N; this interaction contributes to the virus-induced degradation of mitochondria by autophagy, which leads to degradation of MAVS and inhibition of type I interferon (IFN) responses.

It localises to the mitochondrion. It catalyses the reaction GTP + H2O = GDP + phosphate + H(+). Functionally, GTP hydrolase that promotes the GTP-dependent binding of aminoacyl-tRNA to the A-site of ribosomes during protein biosynthesis. Also plays a role in the regulation of autophagy and innate immunity. Recruits ATG5-ATG12 and NLRX1 at mitochondria and serves as a checkpoint of the RIGI-MAVS pathway. In turn, inhibits RLR-mediated type I interferon while promoting autophagy. The chain is Elongation factor Tu, mitochondrial (TUFM) from Homo sapiens (Human).